Consider the following 717-residue polypeptide: Patatin-like phospholipase domain-containing protein PGUG_03164 (717 aa).

A helical transmembrane segment spans residues 123 to 143; it reads WPFLIIITVWILLLCILYTVV. In terms of domain architecture, PNPLA spans 298-490; it reads LCLSGGACFA…RTDIPIDALK (193 aa). Positions 329-333 match the GXSXG motif; sequence GTSGG. Residue serine 331 is the Nucleophile of the active site. The active-site Proton acceptor is aspartate 477. Positions 680–717 are disordered; that stretch reads YDSESSAEETLSPGFSQGTHAVLTDESDDDSSDDEIDD. Positions 704–717 are enriched in acidic residues; that stretch reads DESDDDSSDDEIDD.

This sequence belongs to the PLPL family.

The protein localises to the membrane. Functionally, probable lipid hydrolase. This chain is Patatin-like phospholipase domain-containing protein PGUG_03164, found in Meyerozyma guilliermondii (strain ATCC 6260 / CBS 566 / DSM 6381 / JCM 1539 / NBRC 10279 / NRRL Y-324) (Yeast).